A 270-amino-acid chain; its full sequence is Thiazole synthase (270 aa).

K111 serves as the catalytic Schiff-base intermediate with DXP. Residues G172, 198–199, and 220–221 contribute to the 1-deoxy-D-xylulose 5-phosphate site; these read AG and NT.

This sequence belongs to the ThiG family. In terms of assembly, homotetramer. Forms heterodimers with either ThiH or ThiS.

The protein localises to the cytoplasm. It carries out the reaction [ThiS sulfur-carrier protein]-C-terminal-Gly-aminoethanethioate + 2-iminoacetate + 1-deoxy-D-xylulose 5-phosphate = [ThiS sulfur-carrier protein]-C-terminal Gly-Gly + 2-[(2R,5Z)-2-carboxy-4-methylthiazol-5(2H)-ylidene]ethyl phosphate + 2 H2O + H(+). The protein operates within cofactor biosynthesis; thiamine diphosphate biosynthesis. Functionally, catalyzes the rearrangement of 1-deoxy-D-xylulose 5-phosphate (DXP) to produce the thiazole phosphate moiety of thiamine. Sulfur is provided by the thiocarboxylate moiety of the carrier protein ThiS. In vitro, sulfur can be provided by H(2)S. This chain is Thiazole synthase, found in Methylococcus capsulatus (strain ATCC 33009 / NCIMB 11132 / Bath).